Reading from the N-terminus, the 611-residue chain is Podocan (611 aa).

A signal peptide spans 1-23 (MAGSRGLPLLLLVLQLFLGPVLP). Residues 60-97 (PEPGPATVDCPRDCACSQEGVVDCGGIDLREFPGDLPE) enclose the LRRNT domain. LRR repeat units lie at residues 98 to 119 (HTNHLSLQNNQLEKIYPEELSR), 122 to 145 (RLETLNLQNNRLTSRGLPEEAFEH), 148 to 169 (SLNYLYLANNKLTLAPRFLPNA), 170 to 190 (LISVDFAANYLTKIYGLTFGQ), and 193 to 213 (NLRSVYLHNNKLADAGLPDHM). Asparagine 215 carries N-linked (GlcNAc...) asparagine glycosylation. 15 LRR repeats span residues 219-239 (NVEILILSSNFLRHVPKHLPP), 240-261 (ALYKLHLKNNKLEKIPPGAFSE), 264-284 (NLRELYLQNNYLTDEGLDNET), 290-311 (SLEYLDLSSNNLSRVPAGLPRS), 312-332 (LVLLHLEKNAIQSVEADVLTP), 335-358 (NLEYLLLHSNQLQAKGIHPLAFQG), 361-382 (KLHTVHLYNNALERVPSGLPRR), 383-403 (VRTLMILHNQITGIGREDFAT), 406-427 (FLEELNLSYNRITSPQMHRDAF), 432-453 (LLRSLDLSGNRLQTLPPGLPKN), 477-490 (QLRELYLTGNRLRS), 503-523 (GLQLLDIAGNQLTEVPEGLPP), 524-545 (SLEYLYLQNNKISAVPANAFDS), 548-569 (NLKGIFLRFNKLAVGSVVESAF), and 574-583 (HLQVLDIEGN). N-linked (GlcNAc...) asparagine glycosylation is present at asparagine 282. Asparagine 411 carries an N-linked (GlcNAc...) asparagine glycan. The disordered stretch occupies residues 585–611 (EFGNGSKDKDEEEEEEEEEEDEEEETR). Over residues 594–611 (DEEEEEEEEEEDEEEETR) the composition is skewed to acidic residues.

The protein belongs to the small leucine-rich proteoglycan (SLRP) family. SLRP class V subfamily. Binds to type I collagen. Post-translationally, N-glycosylated. Kidney. Expressed in podocytes and likely vascular endothelial cells within the glomerulus.

It localises to the secreted. Its subcellular location is the extracellular space. It is found in the extracellular matrix. Functionally, negatively regulates cell proliferation and cell migration, especially in smooth muscle cells. The chain is Podocan (Podn) from Mus musculus (Mouse).